The primary structure comprises 301 residues: MNLETLRQERRKWLTWKNIVPYQEAIKALPEYDDVEVSLGDVVDIQIADLSHKDAEQIRETALLMKPWRKGPFRINDLFIDSEWQSQIKYNLLEPHFDLKGKVVGDIGCNNGYYLFRMLSQKPEKLIGFDPSAIYYSQFRFLEHFIKSDIVYELLGVEHVEFYEHKFDTLFCLGVLYHRSDPVAMLKSLFKGLNKGGELILDTFMIDGEGEMCLTPRDRYSKIPNIYFVPTVNALKNWCLRAGFESVEVLEIMKTDLNEQRKTEWIDTQSLEDFLDPDDPEKTVEGYPAPKRVYIKAIKKA.

Carboxy-S-adenosyl-L-methionine-binding positions include lysine 70, tryptophan 84, lysine 89, glycine 108, 130-132 (DPS), 157-158 (VE), tyrosine 177, and arginine 292.

This sequence belongs to the class I-like SAM-binding methyltransferase superfamily. CmoB family. In terms of assembly, homotetramer.

It carries out the reaction carboxy-S-adenosyl-L-methionine + 5-hydroxyuridine(34) in tRNA = 5-carboxymethoxyuridine(34) in tRNA + S-adenosyl-L-homocysteine + H(+). Its function is as follows. Catalyzes carboxymethyl transfer from carboxy-S-adenosyl-L-methionine (Cx-SAM) to 5-hydroxyuridine (ho5U) to form 5-carboxymethoxyuridine (cmo5U) at position 34 in tRNAs. The polypeptide is tRNA U34 carboxymethyltransferase (Sulfurovum sp. (strain NBC37-1)).